The sequence spans 610 residues: Pyruvate decarboxylase 1 (610 aa).

2 residues coordinate substrate: Asp-72 and His-159. Residues 437–519 (DSWFNCQKLR…FLINNGGYTI (83 aa)) form a thiamine pyrophosphate binding region. Asp-487, Asn-514, and Gly-516 together coordinate Mg(2+). Residue Glu-520 participates in substrate binding.

It belongs to the TPP enzyme family. In terms of assembly, homotetramer. A metal cation is required as a cofactor. Requires thiamine diphosphate as cofactor.

It catalyses the reaction a 2-oxocarboxylate + H(+) = an aldehyde + CO2. This Zea mays (Maize) protein is Pyruvate decarboxylase 1 (PDC1).